Consider the following 159-residue polypeptide: SsrA-binding protein (159 aa).

Belongs to the SmpB family.

It localises to the cytoplasm. Functionally, required for rescue of stalled ribosomes mediated by trans-translation. Binds to transfer-messenger RNA (tmRNA), required for stable association of tmRNA with ribosomes. tmRNA and SmpB together mimic tRNA shape, replacing the anticodon stem-loop with SmpB. tmRNA is encoded by the ssrA gene; the 2 termini fold to resemble tRNA(Ala) and it encodes a 'tag peptide', a short internal open reading frame. During trans-translation Ala-aminoacylated tmRNA acts like a tRNA, entering the A-site of stalled ribosomes, displacing the stalled mRNA. The ribosome then switches to translate the ORF on the tmRNA; the nascent peptide is terminated with the 'tag peptide' encoded by the tmRNA and targeted for degradation. The ribosome is freed to recommence translation, which seems to be the essential function of trans-translation. This Frankia casuarinae (strain DSM 45818 / CECT 9043 / HFP020203 / CcI3) protein is SsrA-binding protein.